Consider the following 957-residue polypeptide: Glycine dehydrogenase (decarboxylating) (957 aa).

Lysine 708 carries the post-translational modification N6-(pyridoxal phosphate)lysine.

It belongs to the GcvP family. The glycine cleavage system is composed of four proteins: P, T, L and H. Requires pyridoxal 5'-phosphate as cofactor.

The enzyme catalyses N(6)-[(R)-lipoyl]-L-lysyl-[glycine-cleavage complex H protein] + glycine + H(+) = N(6)-[(R)-S(8)-aminomethyldihydrolipoyl]-L-lysyl-[glycine-cleavage complex H protein] + CO2. The glycine cleavage system catalyzes the degradation of glycine. The P protein binds the alpha-amino group of glycine through its pyridoxal phosphate cofactor; CO(2) is released and the remaining methylamine moiety is then transferred to the lipoamide cofactor of the H protein. The chain is Glycine dehydrogenase (decarboxylating) from Escherichia coli O1:K1 / APEC.